Reading from the N-terminus, the 257-residue chain is Snake venom serine protease 3 (257 aa).

Residues 1–18 (MVLIRVLANLLILQLSYA) form the signal peptide. Residues 19–24 (QKSSEL) constitute a propeptide that is removed on maturation. The 224-residue stretch at 25–248 (VIGGDECNIN…YTDWIQNIIA (224 aa)) folds into the Peptidase S1 domain. 6 disulfides stabilise this stretch: Cys31–Cys163, Cys50–Cys66, Cys98–Cys255, Cys142–Cys209, Cys174–Cys188, and Cys199–Cys224. An N-linked (GlcNAc...) asparagine glycan is attached at Asn44. His65 functions as the Charge relay system in the catalytic mechanism. The N-linked (GlcNAc...) asparagine glycan is linked to Asn103. Asp110 (charge relay system) is an active-site residue. Residues Asn117 and Asn154 are each glycosylated (N-linked (GlcNAc...) asparagine). Ser203 serves as the catalytic Charge relay system. An N-linked (GlcNAc...) asparagine glycan is attached at Asn250.

Belongs to the peptidase S1 family. Snake venom subfamily. As to quaternary structure, monomer. As to expression, expressed by the venom gland.

The protein localises to the secreted. Functionally, snake venom serine protease that may act in the hemostasis system of the prey. The sequence is that of Snake venom serine protease 3 (TLF3) from Protobothrops flavoviridis (Habu).